A 167-amino-acid chain; its full sequence is 3-isopropylmalate dehydratase small subunit (167 aa).

This sequence belongs to the LeuD family. LeuD type 2 subfamily. As to quaternary structure, heterodimer of LeuC and LeuD.

The enzyme catalyses (2R,3S)-3-isopropylmalate = (2S)-2-isopropylmalate. It functions in the pathway amino-acid biosynthesis; L-leucine biosynthesis; L-leucine from 3-methyl-2-oxobutanoate: step 2/4. Functionally, catalyzes the isomerization between 2-isopropylmalate and 3-isopropylmalate, via the formation of 2-isopropylmaleate. The chain is 3-isopropylmalate dehydratase small subunit from Sulfurimonas denitrificans (strain ATCC 33889 / DSM 1251) (Thiomicrospira denitrificans (strain ATCC 33889 / DSM 1251)).